The chain runs to 439 residues: Protein disulfide-isomerase A6 (439 aa).

Positions 1 to 19 are cleaved as a signal peptide; sequence MARLGFGLVSCTFFLAASG. Thioredoxin domains lie at 20-133 and 151-287; these read LYSS…ALRQ and QGRG…EDVA. Catalysis depends on nucleophile residues cysteine 55 and cysteine 58. Cysteine 55 and cysteine 58 are joined by a disulfide. 3 positions are modified to phosphoserine: serine 129, serine 156, and serine 158. Residues 141-160 are disordered; it reads GRSGGYSSGKQGRGDSSSKK. Active-site nucleophile residues include cysteine 190 and cysteine 193. Residues cysteine 190 and cysteine 193 are joined by a disulfide bond. The segment at 400–425 is disordered; the sequence is GSFPAITAREPWDGRDGELPVEDDID. Phosphoserine is present on serine 427. Positions 436–439 match the Prevents secretion from ER motif; it reads KDEL.

This sequence belongs to the protein disulfide isomerase family. In terms of assembly, part of a large chaperone multiprotein complex comprising DNAJB11, HSP90B1, HSPA5, HYOU, PDIA2, PDIA4, PDIA6, PPIB, SDF2L1, UGGT1 and very small amounts of ERP29, but not, or at very low levels, CALR nor CANX. Interacts with MICA on the surface of tumor cells, leading to MICA disulfide bond reduction which is required for its release from tumor cells. Interacts with ITGB3 following platelet stimulation. Interacts with ERN1; the interaction is direct. Interacts with EIF2AK3. Expressed most abundantly in lung and kidney, followed by heart, liver and brain.

The protein localises to the endoplasmic reticulum lumen. Its subcellular location is the cell membrane. It localises to the melanosome. The catalysed reaction is Catalyzes the rearrangement of -S-S- bonds in proteins.. Functionally, may function as a chaperone that inhibits aggregation of misfolded proteins. Negatively regulates the unfolded protein response (UPR) through binding to UPR sensors such as ERN1, which in turn inactivates ERN1 signaling. May also regulate the UPR via the EIF2AK3 UPR sensor. Plays a role in platelet aggregation and activation by agonists such as convulxin, collagen and thrombin. The polypeptide is Protein disulfide-isomerase A6 (PDIA6) (Mesocricetus auratus (Golden hamster)).